Here is a 363-residue protein sequence, read N- to C-terminus: MSKNYHIAVLPGDGIGPEVMAQALKVMDAVRSRFDMRITTSRYDVGGIAIDNHGHPLPKATVEGCEQADAILFGSVGGPKWENLPPESQPERGALLPLRKHFKLFSNLRPAKLYQGLEAFCPLRADIAANGFDILCVRELTGGIYFGQPKGREGSGQYEKAFDTEVYHRFEIERIARIAFESARKRRRKVTSIDKANVLQSSILWREIVNDVAKTYPDVELAHMYIDNATMQLIKDPSQFDVLLCSNLFGDILSDECAMITGSMGMLPSASLNEQGFGLYEPAGGSAPDIAGKNIANPIAQILSLALLLRYSLDANDAATAIEQAINRALEEGVRTGDLARGAAAVSTDEMGDIIARYVAEGV.

Position 78-91 (78-91 (GPKWENLPPESQPE)) interacts with NAD(+). The substrate site is built by Arg99, Arg109, Arg138, and Asp227. Residues Asp227, Asp251, and Asp255 each coordinate Mg(2+). An NAD(+)-binding site is contributed by 285–297 (GSAPDIAGKNIAN).

Belongs to the isocitrate and isopropylmalate dehydrogenases family. LeuB type 1 subfamily. In terms of assembly, homodimer. Requires Mg(2+) as cofactor. Mn(2+) serves as cofactor.

The protein localises to the cytoplasm. The catalysed reaction is (2R,3S)-3-isopropylmalate + NAD(+) = 4-methyl-2-oxopentanoate + CO2 + NADH. It participates in amino-acid biosynthesis; L-leucine biosynthesis; L-leucine from 3-methyl-2-oxobutanoate: step 3/4. Catalyzes the oxidation of 3-carboxy-2-hydroxy-4-methylpentanoate (3-isopropylmalate) to 3-carboxy-4-methyl-2-oxopentanoate. The product decarboxylates to 4-methyl-2 oxopentanoate. In Salmonella paratyphi A (strain ATCC 9150 / SARB42), this protein is 3-isopropylmalate dehydrogenase.